Here is a 368-residue protein sequence, read N- to C-terminus: 1-deoxy-D-xylulose 5-phosphate reductoisomerase (368 aa).

The NADPH site is built by Thr-7, Gly-8, Ser-9, Ile-10, Gly-31, Lys-32, Asn-33, and Asn-113. 1-deoxy-D-xylulose 5-phosphate is bound at residue Lys-114. Residue Glu-115 coordinates NADPH. Asp-133 is a binding site for Mn(2+). 1-deoxy-D-xylulose 5-phosphate contacts are provided by Ser-134, Glu-135, Ser-158, and His-181. Glu-135 provides a ligand contact to Mn(2+). Gly-187 provides a ligand contact to NADPH. 1-deoxy-D-xylulose 5-phosphate is bound by residues Ser-194, Asn-199, Lys-200, and Glu-203. Position 203 (Glu-203) interacts with Mn(2+).

It belongs to the DXR family. Requires Mg(2+) as cofactor. Mn(2+) is required as a cofactor.

The catalysed reaction is 2-C-methyl-D-erythritol 4-phosphate + NADP(+) = 1-deoxy-D-xylulose 5-phosphate + NADPH + H(+). It functions in the pathway isoprenoid biosynthesis; isopentenyl diphosphate biosynthesis via DXP pathway; isopentenyl diphosphate from 1-deoxy-D-xylulose 5-phosphate: step 1/6. Its function is as follows. Catalyzes the NADPH-dependent rearrangement and reduction of 1-deoxy-D-xylulose-5-phosphate (DXP) to 2-C-methyl-D-erythritol 4-phosphate (MEP). The protein is 1-deoxy-D-xylulose 5-phosphate reductoisomerase of Helicobacter pylori (strain HPAG1).